The primary structure comprises 354 residues: DNA integrity scanning protein DisA (354 aa).

Residues 6–144 (DDELKKILKI…GDIKYVLRDS (139 aa)) enclose the DAC domain. ATP contacts are provided by residues G73, L91, and 104–108 (TRHRT).

The protein belongs to the DisA family. As to quaternary structure, homooctamer. The cofactor is Mg(2+).

The enzyme catalyses 2 ATP = 3',3'-c-di-AMP + 2 diphosphate. Its function is as follows. Participates in a DNA-damage check-point that is active prior to asymmetric division when DNA is damaged. DisA forms globular foci that rapidly scan along the chromosomes during sporulation, searching for lesions. When a lesion is present, DisA pauses at the lesion site. This triggers a cellular response that culminates in a temporary block in sporulation initiation. In terms of biological role, also has diadenylate cyclase activity, catalyzing the condensation of 2 ATP molecules into cyclic di-AMP (c-di-AMP). c-di-AMP acts as a signaling molecule that couples DNA integrity with progression of sporulation. The rise in c-di-AMP level generated by DisA while scanning the chromosome, operates as a positive signal that advances sporulation; upon encountering a lesion, the DisA focus arrests at the damaged site and halts c-di-AMP synthesis. The protein is DNA integrity scanning protein DisA of Clostridium perfringens (strain 13 / Type A).